The following is a 111-amino-acid chain: Nucleoid-associated protein Cphamn1_1179 (111 aa).

This sequence belongs to the YbaB/EbfC family. Homodimer.

Its subcellular location is the cytoplasm. The protein resides in the nucleoid. In terms of biological role, binds to DNA and alters its conformation. May be involved in regulation of gene expression, nucleoid organization and DNA protection. The chain is Nucleoid-associated protein Cphamn1_1179 from Chlorobium phaeobacteroides (strain BS1).